The primary structure comprises 121 residues: UPF0102 protein BF0706 (121 aa).

The protein belongs to the UPF0102 family.

This chain is UPF0102 protein BF0706, found in Bacteroides fragilis (strain YCH46).